The chain runs to 1367 residues: Tonsoku-like protein (1367 aa).

TPR repeat units lie at residues 27–60 (AVCC…LESV), 67–100 (AVAH…AGSL), 107–147 (QRAW…VDEK), 162–195 (TRLY…AEQN), 202–235 (FRAR…ARAM), 242–275 (SECC…GSQK), 311–344 (MAIC…AELL), 352–385 (AVIH…RKGN), and 390–424 (AKTW…AQQA). Residues 460-509 (SMAKDTEEEEEEEEEEEEEASEALETSEMELSESEDDADGLSQQLEEEEE) are disordered. The segment covering 465–509 (TEEEEEEEEEEEEEASEALETSEMELSESEDDADGLSQQLEEEEE) has biased composition (acidic residues). ANK repeat units follow at residues 528–557 (MGET…PLNP), 561–590 (CGWT…AVDD), and 597–626 (DGIT…SVTL). Disordered regions lie at residues 660–714 (MERR…EASP) and 726–785 (SAVC…TAIS). Polar residues predominate over residues 666-684 (MASSGQASHSSPALQTIPN). Residues 692 to 713 (TSPPSSPCPKPPSYTPRPPEAS) show a composition bias toward pro residues. Positions 772–781 (KTPDPSKSRE) are enriched in basic and acidic residues. An Omega-N-methylarginine modification is found at Arg-797. Disordered stretches follow at residues 798-820 (GVGS…EVPA) and 841-910 (TPLT…GPNK). The segment covering 844-857 (TRSSSSSRPSTSIS) has biased composition (low complexity). The segment covering 894–909 (AEPTENSSMPRTTGPN) has biased composition (polar residues). LRR repeat units follow at residues 1062–1086 (HTAL…LLAT), 1090–1118 (MPNL…SLGQ), 1121–1144 (FQNV…ALAS), 1181–1205 (AEHL…VLQS), 1240–1263 (GCAL…ELSR), 1268–1293 (CPSL…LLSA), and 1324–1347 (LSQL…TLCQ).

It belongs to the Tonsoku family. As to quaternary structure, component of the MMS22L-TONSL complex, a complex at least composed of MMS22L and TONSL/NFKBIL2. Interacts with the MCM complex, the FACT complex and the RPA complex. Interacts with MCM5; the interaction is direct. Binds histones, with a strong preference for histone H3.1 (histones H3.1 and H3-4/H3.1t). Interacts (via ANK repeats) with histone H4; specifically binds histone H4 lacking methylation at 'Lys-20' (H4K20me0). May interact with DNAJC9; the interaction seems to be histone-dependent.

The protein localises to the nucleus. It localises to the chromosome. The protein resides in the cytoplasm. In terms of biological role, component of the MMS22L-TONSL complex, a complex that promotes homologous recombination-mediated repair of double-strand breaks (DSBs) at stalled or collapsed replication forks. The MMS22L-TONSL complex is required to maintain genome integrity during DNA replication. It mediates the assembly of RAD51 filaments on single-stranded DNA (ssDNA): the MMS22L-TONSL complex is recruited to DSBs following histone replacement by histone chaperones and eviction of the replication protein A complex (RPA/RP-A) from DSBs. Following recruitment to DSBs, the TONSL-MMS22L complex promotes recruitment of RAD51 filaments and subsequent homologous recombination. Within the complex, TONSL acts as a histone reader, which recognizes and binds newly synthesized histones following their replacement by histone chaperones. Specifically binds histone H4 lacking methylation at 'Lys-20' (H4K20me0) and histone H3.1. This is Tonsoku-like protein from Rattus norvegicus (Rat).